The chain runs to 928 residues: Chitin synthase 2 (928 aa).

2 disordered regions span residues 1–45 and 110–179; these read MAYN…EAYA and AYYT…SPAP. Polar residues predominate over residues 17-28; the sequence is PSAQPQYDSRSP. Residues 130–140 show a composition bias toward basic and acidic residues; sequence PSHDEPYRPDT. 9 helical membrane passes run 472–492, 570–589, 613–633, 644–664, 678–698, 723–743, 753–773, 854–874, and 893–913; these read SAFGFISVLPGAFCAYRYVAL, WLNGSFFAAVYAVAHVYQLW, LFAWFAIGNFFLVFRLLTASL, TVLGVVFEFVYLGTLLYCFIL, MMMVIFWSVLMVWLTFASIFL, FFGLIVSLASTYVLWFVASFL, CFLQYIVLTPTYINVLNIYAF, VTAWMITNFILVAAVLNIAGF, and VILWSVAGLSLFRFTGACWFL.

Belongs to the chitin synthase family. Class I subfamily.

Its subcellular location is the cell membrane. It catalyses the reaction [(1-&gt;4)-N-acetyl-beta-D-glucosaminyl](n) + UDP-N-acetyl-alpha-D-glucosamine = [(1-&gt;4)-N-acetyl-beta-D-glucosaminyl](n+1) + UDP + H(+). In terms of biological role, polymerizes chitin, a structural polymer of the cell wall and septum, by transferring the sugar moiety of UDP-GlcNAc to the non-reducing end of the growing chitin polymer. CHS2 plays a synergistic role to CHS1 in normal yeast cell reproductive growth, even if this role is less predominant than for CHS1. With CHS3, plays an important role in virulence. This chain is Chitin synthase 2, found in Exophiala dermatitidis (Black yeast-like fungus).